A 107-amino-acid polypeptide reads, in one-letter code: Thiosulfate sulfurtransferase GlpE (107 aa).

Residues 19-107 (QDLNAVLVDI…WHKAGLPVEK (89 aa)) form the Rhodanese domain. Cysteine 67 (cysteine persulfide intermediate) is an active-site residue.

This sequence belongs to the GlpE family.

The protein localises to the cytoplasm. It catalyses the reaction thiosulfate + hydrogen cyanide = thiocyanate + sulfite + 2 H(+). It carries out the reaction thiosulfate + [thioredoxin]-dithiol = [thioredoxin]-disulfide + hydrogen sulfide + sulfite + 2 H(+). Functionally, transferase that catalyzes the transfer of sulfur from thiosulfate to thiophilic acceptors such as cyanide or dithiols. May function in a CysM-independent thiosulfate assimilation pathway by catalyzing the conversion of thiosulfate to sulfite, which can then be used for L-cysteine biosynthesis. The protein is Thiosulfate sulfurtransferase GlpE of Aliivibrio fischeri (strain ATCC 700601 / ES114) (Vibrio fischeri).